The sequence spans 83 residues: Exodeoxyribonuclease 7 small subunit (83 aa).

Belongs to the XseB family. In terms of assembly, heterooligomer composed of large and small subunits.

It localises to the cytoplasm. The enzyme catalyses Exonucleolytic cleavage in either 5'- to 3'- or 3'- to 5'-direction to yield nucleoside 5'-phosphates.. In terms of biological role, bidirectionally degrades single-stranded DNA into large acid-insoluble oligonucleotides, which are then degraded further into small acid-soluble oligonucleotides. The chain is Exodeoxyribonuclease 7 small subunit from Novosphingobium aromaticivorans (strain ATCC 700278 / DSM 12444 / CCUG 56034 / CIP 105152 / NBRC 16084 / F199).